The sequence spans 262 residues: Global transcriptional regulator CodY (262 aa).

The segment at 1–159 is GAF domain; that stretch reads MATLLEKTRK…ATTVIGVQLS (159 aa). The segment at residues 207–226 is a DNA-binding region (H-T-H motif); the sequence is ASVIADKIGITRSVIVNALR.

The protein belongs to the CodY family.

It is found in the cytoplasm. Its function is as follows. DNA-binding global transcriptional regulator which is involved in the adaptive response to starvation and acts by directly or indirectly controlling the expression of numerous genes in response to nutrient availability. During rapid exponential growth, CodY is highly active and represses genes whose products allow adaptation to nutrient depletion. The chain is Global transcriptional regulator CodY from Lactococcus lactis subsp. lactis (strain IL1403) (Streptococcus lactis).